The sequence spans 254 residues: MIRFDCITLFPEMFAAVTESGITRRALEEQRWQWQGWNPRDFAENAWRRVDDRPFGGGPGMVMQPGPLEKAIAAAKSQQREAGLAKSRVIYLSPQGAPLTHERVMQLATGDEGLILLCGRYEGIDERLIERCVDEEISIGDFVLSGGELPAMVLIDAVVRQLPGVLGDAASAVEDSFVGGLLDCPHYTRPEVYEGVSVPETLMSGDHKRIRRWRLKQSLARTRKRRPDLLAHRVLSAEETQLLTEISGEEQCGE.

Residues Gly-119 and 139 to 144 (IGDFVL) contribute to the S-adenosyl-L-methionine site.

Belongs to the RNA methyltransferase TrmD family. Homodimer.

It is found in the cytoplasm. The catalysed reaction is guanosine(37) in tRNA + S-adenosyl-L-methionine = N(1)-methylguanosine(37) in tRNA + S-adenosyl-L-homocysteine + H(+). Its function is as follows. Specifically methylates guanosine-37 in various tRNAs. The sequence is that of tRNA (guanine-N(1)-)-methyltransferase from Dechloromonas aromatica (strain RCB).